A 327-amino-acid chain; its full sequence is Lactosylceramide 4-alpha-galactosyltransferase (327 aa).

Positions 166-168 (DTD) match the DXD motif motif.

It belongs to the glycosyltransferase 32 family.

It is found in the golgi apparatus membrane. The enzyme catalyses a beta-D-Gal-(1-&gt;4)-beta-D-Glc-(1&lt;-&gt;1)-Cer(d18:1(4E)) + UDP-alpha-D-galactose = a globoside Gb3Cer (d18:1(4E)) + UDP + H(+). It catalyses the reaction a beta-D-Gal-(1&lt;-&gt;1')-ceramide + UDP-alpha-D-galactose = alpha-D-Gal-(1-&gt;4)-beta-D-Gal-(1&lt;-&gt;1')-Cer + UDP + H(+). The protein operates within glycolipid biosynthesis. Its function is as follows. Catalyzes the transfer of galactose from UDP-alpha-D-galactose to lactosylceramide/beta-D-galactosyl-(1-&gt;4)-beta-D-glucosyl-(1&lt;-&gt;1)-ceramide(d18:1(4E)) to produce globotriaosylceramide/globoside Gb3Cer (d18:1(4E)). Also able to transfer galactose to galactosylceramide/beta-D-Gal-(1&lt;-&gt;1')-Cer. Globoside Gb3Cer is a glycosphingolipid of the globo serie, one of the major types of neutral root structures of glycosphingolipids, that constitute a significant portion of mammalian cell membranes. This is Lactosylceramide 4-alpha-galactosyltransferase (A4GALT) from Gorilla gorilla gorilla (Western lowland gorilla).